A 612-amino-acid chain; its full sequence is Rhamnogalacturonan exolyase YesX (612 aa).

Asn-119 contributes to the substrate binding site. 6 residues coordinate Ca(2+): Asp-120, Asp-125, Asp-127, Asp-129, Glu-131, and Glu-133. Substrate-binding residues include Asp-139, Glu-154, and Arg-174. Residues Asp-189, Asp-191, Asp-193, Lys-195, and Glu-197 each coordinate Ca(2+). Gly-205 and Arg-222 together coordinate substrate. Residues His-330, Asp-336, Asp-338, Asp-340, Lys-342, Glu-344, Asp-353, His-354, His-366, Asp-368, Asp-374, Asp-376, Arg-379, Gly-381, Glu-383, and Glu-389 each contribute to the Ca(2+) site. Substrate is bound at residue Arg-419. Residues Asp-472, Asp-474, Val-476, and Glu-478 each contribute to the Ca(2+) site. 516–518 contributes to the substrate binding site; the sequence is NGT. 7 residues coordinate Ca(2+): Asn-527, Phe-529, Asp-531, Arg-533, Glu-535, Asn-576, and Ala-578. Tyr-579 contacts substrate. Asn-580 lines the Ca(2+) pocket.

This sequence belongs to the polysaccharide lyase 11 family. As to quaternary structure, monomer. Requires Mn(2+) as cofactor. It depends on Zn(2+) as a cofactor. Co(2+) is required as a cofactor. The cofactor is Ca(2+).

It is found in the secreted. The catalysed reaction is Exotype eliminative cleavage of alpha-L-rhamnopyranosyl-(1-&gt;4)-alpha-D-galactopyranosyluronic acid bonds of rhamnogalacturonan I oligosaccharides containing alpha-L-rhamnopyranose at the reducing end and 4-deoxy-4,5-unsaturated D-galactopyranosyluronic acid at the non-reducing end. The products are the disaccharide 2-O-(4-deoxy-beta-L-threo-hex-4-enopyranuronosyl)-alpha-L-rhamnopyranose and the shortened rhamnogalacturonan oligosaccharide containing one 4-deoxy-4,5-unsaturated D-galactopyranosyluronic acid at the non-reducing end.. Functionally, pectinolytic enzyme that degrades type I rhamnogalacturonan from plant cell walls and releases disaccharide products. Degrades rhamnogalacturonan, polygalacturonic acid and pectic acid. Has very low activity on pectin. This chain is Rhamnogalacturonan exolyase YesX (yesX), found in Bacillus subtilis (strain 168).